We begin with the raw amino-acid sequence, 174 residues long: MIDSDGFRANVGIIICNRYGQVMWARRFGQHSWQFPQGGVDDGETAEEAMYRELYEEVGLRPEHVTILTSTRSWLRYRLPKRLVRQDSKPVCIGQKQKWFLLQLKSQDSAINLSSSGHPEFDDWRWVSYWYPVRQVVSFKRDVYRKVMKEFAVTALSFQTQEIPRKRVRQRTTG.

The region spanning glycine 6–lysine 149 is the Nudix hydrolase domain. The short motif at glycine 38–glycine 59 is the Nudix box element.

This sequence belongs to the Nudix hydrolase family. RppH subfamily. The cofactor is a divalent metal cation.

Accelerates the degradation of transcripts by removing pyrophosphate from the 5'-end of triphosphorylated RNA, leading to a more labile monophosphorylated state that can stimulate subsequent ribonuclease cleavage. The polypeptide is RNA pyrophosphohydrolase (Shewanella sp. (strain MR-7)).